Consider the following 667-residue polypeptide: Glycine--tRNA ligase beta subunit (667 aa).

It belongs to the class-II aminoacyl-tRNA synthetase family. Tetramer of two alpha and two beta subunits.

The protein localises to the cytoplasm. The enzyme catalyses tRNA(Gly) + glycine + ATP = glycyl-tRNA(Gly) + AMP + diphosphate. The protein is Glycine--tRNA ligase beta subunit of Rickettsia canadensis (strain McKiel).